Consider the following 630-residue polypeptide: Chaperone protein DnaK (630 aa).

Position 197 is a phosphothreonine; by autocatalysis (Thr197). A compositionally biased stretch (polar residues) spans 604 to 618 (KNNESVKNNESVKNN). The disordered stretch occupies residues 604-630 (KNNESVKNNESVKNNESVKDVDFEEIK). The segment covering 619–630 (ESVKDVDFEEIK) has biased composition (basic and acidic residues).

It belongs to the heat shock protein 70 family.

Acts as a chaperone. In Karelsulcia muelleri (strain GWSS) (Sulcia muelleri), this protein is Chaperone protein DnaK.